The chain runs to 85 residues: Large ribosomal subunit protein bL27 (85 aa).

The segment at 1–20 (MAHKKAGGSTRNGRDSEAKR) is disordered.

Belongs to the bacterial ribosomal protein bL27 family.

This is Large ribosomal subunit protein bL27 from Serratia proteamaculans (strain 568).